We begin with the raw amino-acid sequence, 321 residues long: Sideroflexin-1-3 (321 aa).

Helical transmembrane passes span 101-121 (IITG…FWQW), 146-168 (LVTS…NHAV), 174-194 (LLGR…NIPC), 220-240 (AAVV…IPGM), and 266-286 (IQTL…CAFF).

The protein belongs to the sideroflexin family.

It localises to the mitochondrion membrane. Its function is as follows. Mitochondrial amino-acid transporter that mediates transport of serine into mitochondria. The chain is Sideroflexin-1-3 from Drosophila melanogaster (Fruit fly).